We begin with the raw amino-acid sequence, 33 residues long: Imperacalcin (33 aa).

3 cysteine pairs are disulfide-bonded: Cys3/Cys17, Cys10/Cys21, and Cys16/Cys32. Important for stimulation of [3H]ryanodine binding to RYR1 stretches follow at residues 8 to 9 and 19 to 20; these read KR and KK. An essential for stimulation of [3H]ryanodine binding to RYR1 region spans residues 22 to 24; it reads KRR. An important for stimulation of [3H]ryanodine binding to RYR1 region spans residues 25–27; sequence GTN.

Belongs to the scorpion calcin family. In terms of tissue distribution, expressed by the venom gland.

It is found in the secreted. In terms of biological role, this toxin affects the activity of ryanodine receptors 1, 2 and 3 (RyR1, RyR2 and RyR3). At lower concentrations the toxin increases full openings of the RyRs, and at higher concentrations it inhibits full openings and induces openings to subconductance levels (30% of the full conductance state) and reduces the number of full conductance openings. The different actions may be attributed to the toxins binding at different sites on the RyRs, with binding at a high-affinity site mediating the increase in full openings and the induction of subconductance states evoked upon binding to a lower-affinity site. Furthermore, it triggers calcium release from sarcoplasmic vesicles (11.7 nM are enough to induce a sharp release, and 70% of the total calcium is released after toxin (100 nM) addition) probably by acting as a cell-penetrating peptide (CPP). In addition, it has been shown to dose-dependently stimulate ryanodine binding to RyR1 (EC(50)=8.7 nM). It also augments the bell-shaped calcium-[3H]ryanodine binding curve that is maximal at about 10 uM calcium concentration. It binds a different site as ryanodine. It acts synergistically with caffeine. In vivo, intracerebroventricular injection into mice induces neurotoxic symptoms, followed by death. In Pandinus imperator (Emperor scorpion), this protein is Imperacalcin.